Reading from the N-terminus, the 233-residue chain is MLRVRYAHERGKSHPAIHWLRGYHSFSFADYYSPQHIHFSHLRVINEDIIAPQHGFDMHPHQDMEILTYILSGTIEHQDSMGNHTQLHAGEFQIMSAGSGVHHAEINPSSEHDVHLYQIWILPKSKGIAPRYEQGCFADTEGATLILSPEAKDGAFYIHQDMSLWRWQLSLEQSAVKTIPLLPTRRYWLQLVKGQLRVNDVLLNTSDGLAITHENVLQIELIQNSEFLLFDLV.

A divalent metal cation is bound by residues H59, H61, H103, and E105.

This sequence belongs to the pirin family. A divalent metal cation serves as cofactor.

It carries out the reaction quercetin + O2 = 2-(3,4-dihydroxybenzoyloxy)-4,6-dihydroxybenzoate + CO. It participates in flavonoid metabolism; quercetin degradation. Putative quercetin 2,3-dioxygenase. The chain is Putative quercetin 2,3-dioxygenase PM1685 from Pasteurella multocida (strain Pm70).